Here is a 388-residue protein sequence, read N- to C-terminus: Chorismate synthase (388 aa).

NADP(+) is bound by residues R39 and R45. FMN-binding positions include 130–132 (RSS), 251–252 (NA), G296, 311–315 (KPIPT), and R337.

The protein belongs to the chorismate synthase family. In terms of assembly, homotetramer. It depends on FMNH2 as a cofactor.

The enzyme catalyses 5-O-(1-carboxyvinyl)-3-phosphoshikimate = chorismate + phosphate. It functions in the pathway metabolic intermediate biosynthesis; chorismate biosynthesis; chorismate from D-erythrose 4-phosphate and phosphoenolpyruvate: step 7/7. Its function is as follows. Catalyzes the anti-1,4-elimination of the C-3 phosphate and the C-6 proR hydrogen from 5-enolpyruvylshikimate-3-phosphate (EPSP) to yield chorismate, which is the branch point compound that serves as the starting substrate for the three terminal pathways of aromatic amino acid biosynthesis. This reaction introduces a second double bond into the aromatic ring system. The protein is Chorismate synthase of Streptococcus suis (strain 98HAH33).